Consider the following 29-residue polypeptide: Brevinin-2Ed (29 aa).

An intrachain disulfide couples Cys-23 to Cys-29.

Belongs to the frog skin active peptide (FSAP) family. Brevinin subfamily. Expressed by the skin glands.

It is found in the secreted. Shows antibacterial activity against representative Gram-negative and Gram-positive bacterial species, and hemolytic activity. In Pelophylax lessonae (Pool frog), this protein is Brevinin-2Ed.